The following is a 926-amino-acid chain: MSHHKKRVYPQAQAQYGQSATPLQQPAQLVPPQDPAAAGMSYAQMGMPPQGAAAPMGQPQFLTPAQEQLHQQIDQAATSMNDMHLHNVPLVDPNAYMQQQVPAQAGMPFQQQQQPLPAQVYGQPSAAMGQNMRPMNQLYPIDLLTELPPPITDLTLPPPPLVIPPEKMLVPSEVSNASPDYIRSTLNAVPKNSSLLKKSKLPFGLVIRPYQHLYDDIDPPPLNEDGLIVRCRRCRSYMNPFITFIEQGRRWRCNFCRLANDVPMQMDQTDPNDPKSRYDRNEIKCAVMEYMAPKEYTLRQPPPATYCFLVDVSQASIKSGLLATTINTLLQNLDSIPNHDERTRISILCVDNAIHYFKIPLDSDNNEGSTDQINMMDIADLEEPFLPRPNSMVVSLKACRQNIESLLTKIPQIFQSNLITSFALGPALKSAYHLIGGVGGKIIVVSGTLPNLGIGKLQRRNESGVVNTSKETAQLLSCQDSFYKNFTIDCSKVQITVDLFLASEDYMDVASLSNLSRFTAGQTHFYPGFSGKNPNDIVKFSTEFAKHISMDLCMETVMRARGSTGLRMSRFYGHFFNRSSDLCAFSTMPRDQSYLFEVNVDESIMTEYCYIQVAVLLSLNNSQRRIRIITLAMPTTESLAEVYASADQLAIASFYNSKAVEKALNSSLDEARVLINKSVQDILATYKKEIVVSNTAGGAPLRLCANLRMFPLLMHSLTKHMAFRSGIVPSDHRASALNILESLPLKYLIKNIYPDVYSLHDMADEAGLPLQTEDGETTATVVLPQPLNATSSLFERYGLYLIDNGNELFLWMGGDAVPALVFDVFGTQDIFDIPIGKQEIPVVENSEFNQRVRNIINQLRNHDDIITYQSLYIVRGASLSEPVNHASAREVATLRLWASSTLVEDKILNNESYREFLQIMKARISK.

Positions Met-1–Ala-54 are disordered. Low complexity predominate over residues Ala-20–Ala-54. Positions 231, 234, 253, and 256 each coordinate Zn(2+). The segment at Cys-231–Cys-256 is zinc finger-like.

It belongs to the SEC23/SEC24 family. SEC24 subfamily. The COPII coat is composed of at least 5 proteins: the SEC23/24 complex, the SEC13/31 complex, and the protein SAR1. Golgi apparatus membrane; Peripheral membrane protein; Cytoplasmic side.

It is found in the cytoplasm. Its subcellular location is the cytoplasmic vesicle. The protein resides in the COPII-coated vesicle membrane. The protein localises to the endoplasmic reticulum membrane. It localises to the golgi apparatus membrane. In terms of biological role, component of the coat protein complex II (COPII) which promotes the formation of transport vesicles from the endoplasmic reticulum (ER). The coat has two main functions, the physical deformation of the endoplasmic reticulum membrane into vesicles and the selection of cargo molecules. The polypeptide is Protein transport protein SEC24-2 (SEC242) (Saccharomyces uvarum (strain ATCC 76518 / CBS 7001 / CLIB 283 / NBRC 10550 / MCYC 623 / NCYC 2669 / NRRL Y-11845) (Yeast)).